The primary structure comprises 454 residues: MSQPQTVTVDQQEILNRADEVEAPMATPPTDVPQAPSGLTAANNAAEQLAVSADNVRLYLQAGERERQRLATSLRNAAAAYGEVEDESATALDNDGNGEVDAQSAGGAGAGQTESLEETPKVAAAGESDFTDLKTAATKLESGDQGTSMVNFADGWNNFNLSLQRDIKRFRIFENWEGDAATACEASMDQQKEWILHMAKLSASLAKQANFMAQLQLWARRGHPTLADIVELERLAKDPDYQEQAIKLYAEYQETSEKVLSEYNTKADLEPVNPPKPPAAIKIDPPPPAQPQGLIPGFLMPPGDGSTGLASGMTPPMIPPTGGAGGTPDVNTAELTSAGREAASNLSKGLGVKPMSLGGGGGGLGGMPMGDAALAGGESVRPAAAGDIAGAGQGGGAAGRGMAGGGMGMPMGGAGQGQGGAKSKGAQQDEEALYTEDREWTEAVIGNRRRQDNK.

Disordered stretches follow at residues 17–40 (RADE…SGLT), 82–128 (GEVE…AGES), and 391–454 (AGQG…QDNK). Over residues 391 to 422 (AGQGGGAAGRGMAGGGMGMPMGGAGQGQGGAK) the composition is skewed to gly residues.

This sequence belongs to the EspB family. Post-translationally, cleaved at close to the C-terminus during secretion.

It is found in the secreted. The sequence is that of ESX-1 secretion-associated protein EspB from Mycobacterium marinum (strain ATCC BAA-535 / M).